A 175-amino-acid polypeptide reads, in one-letter code: Large ribosomal subunit protein uL10 (175 aa).

Belongs to the universal ribosomal protein uL10 family. As to quaternary structure, part of the ribosomal stalk of the 50S ribosomal subunit. The N-terminus interacts with L11 and the large rRNA to form the base of the stalk. The C-terminus forms an elongated spine to which L12 dimers bind in a sequential fashion forming a multimeric L10(L12)X complex.

In terms of biological role, forms part of the ribosomal stalk, playing a central role in the interaction of the ribosome with GTP-bound translation factors. The chain is Large ribosomal subunit protein uL10 from Psychrobacter sp. (strain PRwf-1).